The sequence spans 152 residues: Large ribosomal subunit protein bL9 (152 aa).

This sequence belongs to the bacterial ribosomal protein bL9 family.

In terms of biological role, binds to the 23S rRNA. The protein is Large ribosomal subunit protein bL9 of Saccharophagus degradans (strain 2-40 / ATCC 43961 / DSM 17024).